Consider the following 371-residue polypeptide: Undecaprenyl-diphosphatase 1 (371 aa).

The next 3 helical transmembrane spans lie at P53 to F73, L100 to H120, and L126 to G146. The interval R152–E226 is disordered. The next 3 membrane-spanning stretches (helical) occupy residues F291 to L311, Q322 to A342, and T351 to F371.

It belongs to the UppP family.

It is found in the cell membrane. It carries out the reaction di-trans,octa-cis-undecaprenyl diphosphate + H2O = di-trans,octa-cis-undecaprenyl phosphate + phosphate + H(+). In terms of biological role, catalyzes the dephosphorylation of undecaprenyl diphosphate (UPP). Confers resistance to bacitracin. This Frankia casuarinae (strain DSM 45818 / CECT 9043 / HFP020203 / CcI3) protein is Undecaprenyl-diphosphatase 1.